Consider the following 101-residue polypeptide: NAD(P)H-quinone oxidoreductase subunit 4L, chloroplastic (101 aa).

3 helical membrane passes run 2-22 (ILEH…YGLI), 32-52 (MCLE…SDFF), and 61-81 (IFCI…LAIV).

This sequence belongs to the complex I subunit 4L family. In terms of assembly, NDH is composed of at least 16 different subunits, 5 of which are encoded in the nucleus.

The protein resides in the plastid. It localises to the chloroplast thylakoid membrane. The enzyme catalyses a plastoquinone + NADH + (n+1) H(+)(in) = a plastoquinol + NAD(+) + n H(+)(out). It carries out the reaction a plastoquinone + NADPH + (n+1) H(+)(in) = a plastoquinol + NADP(+) + n H(+)(out). In terms of biological role, NDH shuttles electrons from NAD(P)H:plastoquinone, via FMN and iron-sulfur (Fe-S) centers, to quinones in the photosynthetic chain and possibly in a chloroplast respiratory chain. The immediate electron acceptor for the enzyme in this species is believed to be plastoquinone. Couples the redox reaction to proton translocation, and thus conserves the redox energy in a proton gradient. This is NAD(P)H-quinone oxidoreductase subunit 4L, chloroplastic from Lepidium virginicum (Virginia pepperweed).